The primary structure comprises 323 residues: Quinolinate synthase (323 aa).

Iminosuccinate contacts are provided by His39 and Ser56. A [4Fe-4S] cluster-binding site is contributed by Cys101. Residues 127–129 (YIN) and Ser144 contribute to the iminosuccinate site. Cys187 is a [4Fe-4S] cluster binding site. Iminosuccinate is bound by residues 213-215 (HPE) and Thr230. Cys280 is a binding site for [4Fe-4S] cluster.

It belongs to the quinolinate synthase family. Type 2 subfamily. [4Fe-4S] cluster serves as cofactor.

It localises to the cytoplasm. It carries out the reaction iminosuccinate + dihydroxyacetone phosphate = quinolinate + phosphate + 2 H2O + H(+). Its pathway is cofactor biosynthesis; NAD(+) biosynthesis; quinolinate from iminoaspartate: step 1/1. Its function is as follows. Catalyzes the condensation of iminoaspartate with dihydroxyacetone phosphate to form quinolinate. This is Quinolinate synthase from Chlorobium phaeobacteroides (strain DSM 266 / SMG 266 / 2430).